Reading from the N-terminus, the 368-residue chain is Peptide chain release factor 2 (368 aa).

N5-methylglutamine is present on Q250.

The protein belongs to the prokaryotic/mitochondrial release factor family. In terms of processing, methylated by PrmC. Methylation increases the termination efficiency of RF2.

The protein resides in the cytoplasm. Its function is as follows. Peptide chain release factor 2 directs the termination of translation in response to the peptide chain termination codons UGA and UAA. The sequence is that of Peptide chain release factor 2 from Rickettsia bellii (strain RML369-C).